Reading from the N-terminus, the 441-residue chain is Serine--tRNA ligase (441 aa).

250-252 (TSE) is an L-serine binding site. Residues 281-283 (RRE) and Val297 contribute to the ATP site. L-serine is bound at residue Glu304. ATP is bound at residue 368–371 (EIVS). Position 402 (Thr402) interacts with L-serine.

Belongs to the class-II aminoacyl-tRNA synthetase family. Type-1 seryl-tRNA synthetase subfamily. As to quaternary structure, homodimer. The tRNA molecule binds across the dimer.

The protein resides in the cytoplasm. It catalyses the reaction tRNA(Ser) + L-serine + ATP = L-seryl-tRNA(Ser) + AMP + diphosphate + H(+). The catalysed reaction is tRNA(Sec) + L-serine + ATP = L-seryl-tRNA(Sec) + AMP + diphosphate + H(+). It functions in the pathway aminoacyl-tRNA biosynthesis; selenocysteinyl-tRNA(Sec) biosynthesis; L-seryl-tRNA(Sec) from L-serine and tRNA(Sec): step 1/1. Its function is as follows. Catalyzes the attachment of serine to tRNA(Ser). Is also able to aminoacylate tRNA(Sec) with serine, to form the misacylated tRNA L-seryl-tRNA(Sec), which will be further converted into selenocysteinyl-tRNA(Sec). The chain is Serine--tRNA ligase from Thermoplasma volcanium (strain ATCC 51530 / DSM 4299 / JCM 9571 / NBRC 15438 / GSS1).